The primary structure comprises 672 residues: Glycine--tRNA ligase beta subunit (672 aa).

It belongs to the class-II aminoacyl-tRNA synthetase family. In terms of assembly, tetramer of two alpha and two beta subunits.

It localises to the cytoplasm. It catalyses the reaction tRNA(Gly) + glycine + ATP = glycyl-tRNA(Gly) + AMP + diphosphate. This is Glycine--tRNA ligase beta subunit (glyS) from Thermotoga maritima (strain ATCC 43589 / DSM 3109 / JCM 10099 / NBRC 100826 / MSB8).